The following is a 447-amino-acid chain: ATP-dependent protease ATPase subunit HslU (447 aa).

Residues Ile17, 59-64 (GVGKTE), Asp256, Glu321, and Arg393 each bind ATP.

It belongs to the ClpX chaperone family. HslU subfamily. As to quaternary structure, a double ring-shaped homohexamer of HslV is capped on each side by a ring-shaped HslU homohexamer. The assembly of the HslU/HslV complex is dependent on binding of ATP.

It is found in the cytoplasm. Its function is as follows. ATPase subunit of a proteasome-like degradation complex; this subunit has chaperone activity. The binding of ATP and its subsequent hydrolysis by HslU are essential for unfolding of protein substrates subsequently hydrolyzed by HslV. HslU recognizes the N-terminal part of its protein substrates and unfolds these before they are guided to HslV for hydrolysis. This is ATP-dependent protease ATPase subunit HslU from Stutzerimonas stutzeri (strain A1501) (Pseudomonas stutzeri).